We begin with the raw amino-acid sequence, 244 residues long: 3-deoxy-manno-octulosonate cytidylyltransferase (244 aa).

The protein belongs to the KdsB family.

It is found in the cytoplasm. It catalyses the reaction 3-deoxy-alpha-D-manno-oct-2-ulosonate + CTP = CMP-3-deoxy-beta-D-manno-octulosonate + diphosphate. The protein operates within nucleotide-sugar biosynthesis; CMP-3-deoxy-D-manno-octulosonate biosynthesis; CMP-3-deoxy-D-manno-octulosonate from 3-deoxy-D-manno-octulosonate and CTP: step 1/1. Its pathway is bacterial outer membrane biogenesis; lipopolysaccharide biosynthesis. Its function is as follows. Activates KDO (a required 8-carbon sugar) for incorporation into bacterial lipopolysaccharide in Gram-negative bacteria. This chain is 3-deoxy-manno-octulosonate cytidylyltransferase, found in Ruthia magnifica subsp. Calyptogena magnifica.